Consider the following 915-residue polypeptide: Rab3 GTPase-activating protein catalytic subunit (915 aa).

It belongs to the Rab3-GAP catalytic subunit family. As to quaternary structure, the Rab3 GTPase-activating complex is a heterodimer composed of rbg-1 and rbg-2.

It localises to the cytoplasm. Its function is as follows. Probable catalytic subunit of a GTPase activating protein that has specificity for Rab3 subfamily. Rab3 proteins are involved in regulated exocytosis of neurotransmitters and hormones. Specifically converts active Rab3-GTP to the inactive form Rab3-GDP. This Caenorhabditis elegans protein is Rab3 GTPase-activating protein catalytic subunit (rbg-1).